We begin with the raw amino-acid sequence, 626 residues long: Serine/threonine-protein kinase PknH (626 aa).

The Cytoplasmic portion of the chain corresponds to 1 to 403 (MSDAQDSRVG…QTPRKTNPWP (403 aa)). The region spanning 16–276 (YHLKRLLGRG…DLALAAHEAL (261 aa)) is the Protein kinase domain. ATP-binding positions include 22-30 (LGRGGMGEV) and K45. D139 functions as the Proton acceptor in the catalytic mechanism. T170 carries the phosphothreonine modification. The tract at residues 292 to 396 (QESTLPAPPK…GGPSPWAQTP (105 aa)) is disordered. 2 stretches are compositionally biased toward pro residues: residues 297 to 308 (PAPPKPVPPPTM) and 316 to 342 (RQPP…PAQP). The segment covering 343–355 (GPAGQRPGPTGQP) has biased composition (low complexity). Residues 404–424 (LVAGAAAVVLVLVLGAIGIWI) form a helical membrane-spanning segment. At 425–626 (AIRPKPVQPP…AKIVDKVNKE (202 aa)) the chain is on the extracellular side. 2 cysteine pairs are disulfide-bonded: C482–C545 and C587–C604.

The protein belongs to the protein kinase superfamily. Ser/Thr protein kinase family. A divalent metal cation serves as cofactor. Post-translationally, autophosphorylated on threonine and serine residues. Dephosphorylated by PstP.

The protein resides in the cell membrane. The enzyme catalyses L-seryl-[protein] + ATP = O-phospho-L-seryl-[protein] + ADP + H(+). The catalysed reaction is L-threonyl-[protein] + ATP = O-phospho-L-threonyl-[protein] + ADP + H(+). Functionally, may regulate bacterial growth in response to external signals to facilitate adaptation to the host environment. The protein is Serine/threonine-protein kinase PknH (pknH) of Mycobacterium tuberculosis (strain CDC 1551 / Oshkosh).